A 287-amino-acid chain; its full sequence is Bifunctional protein FolD (287 aa).

Residues 165 to 167 (NRS), Ser-190, and Ile-233 each bind NADP(+).

The protein belongs to the tetrahydrofolate dehydrogenase/cyclohydrolase family. Homodimer.

The enzyme catalyses (6R)-5,10-methylene-5,6,7,8-tetrahydrofolate + NADP(+) = (6R)-5,10-methenyltetrahydrofolate + NADPH. It catalyses the reaction (6R)-5,10-methenyltetrahydrofolate + H2O = (6R)-10-formyltetrahydrofolate + H(+). It functions in the pathway one-carbon metabolism; tetrahydrofolate interconversion. In terms of biological role, catalyzes the oxidation of 5,10-methylenetetrahydrofolate to 5,10-methenyltetrahydrofolate and then the hydrolysis of 5,10-methenyltetrahydrofolate to 10-formyltetrahydrofolate. In Nitrosopumilus maritimus (strain SCM1), this protein is Bifunctional protein FolD.